The sequence spans 246 residues: Ribonuclease PH (246 aa).

Phosphate contacts are provided by residues Arg-91 and 129-131 (GTR).

It belongs to the RNase PH family. In terms of assembly, homohexameric ring arranged as a trimer of dimers.

It carries out the reaction tRNA(n+1) + phosphate = tRNA(n) + a ribonucleoside 5'-diphosphate. Functionally, phosphorolytic 3'-5' exoribonuclease that plays an important role in tRNA 3'-end maturation. Removes nucleotide residues following the 3'-CCA terminus of tRNAs; can also add nucleotides to the ends of RNA molecules by using nucleoside diphosphates as substrates, but this may not be physiologically important. Probably plays a role in initiation of 16S rRNA degradation (leading to ribosome degradation) during starvation. This chain is Ribonuclease PH, found in Burkholderia ambifaria (strain ATCC BAA-244 / DSM 16087 / CCUG 44356 / LMG 19182 / AMMD) (Burkholderia cepacia (strain AMMD)).